Consider the following 177-residue polypeptide: PLAC8-like protein 1 (177 aa).

It belongs to the cornifelin family.

This Mus musculus (Mouse) protein is PLAC8-like protein 1 (Plac8l1).